We begin with the raw amino-acid sequence, 123 residues long: Large ribosomal subunit protein bL12 (123 aa).

It belongs to the bacterial ribosomal protein bL12 family. As to quaternary structure, homodimer. Part of the ribosomal stalk of the 50S ribosomal subunit. Forms a multimeric L10(L12)X complex, where L10 forms an elongated spine to which 2 to 4 L12 dimers bind in a sequential fashion. Binds GTP-bound translation factors.

Its function is as follows. Forms part of the ribosomal stalk which helps the ribosome interact with GTP-bound translation factors. Is thus essential for accurate translation. The chain is Large ribosomal subunit protein bL12 from Aliarcobacter butzleri (strain RM4018) (Arcobacter butzleri).